The chain runs to 396 residues: 1-deoxy-D-xylulose 5-phosphate reductoisomerase (396 aa).

Positions 13, 14, 15, 16, and 127 each coordinate NADPH. 1-deoxy-D-xylulose 5-phosphate is bound at residue K128. E129 contacts NADPH. D153 serves as a coordination point for Mn(2+). 1-deoxy-D-xylulose 5-phosphate is bound by residues S154, E155, S184, and H207. E155 contacts Mn(2+). G213 lines the NADPH pocket. Positions 220, 225, 226, and 229 each coordinate 1-deoxy-D-xylulose 5-phosphate. E229 serves as a coordination point for Mn(2+).

This sequence belongs to the DXR family. It depends on Mg(2+) as a cofactor. Requires Mn(2+) as cofactor.

The catalysed reaction is 2-C-methyl-D-erythritol 4-phosphate + NADP(+) = 1-deoxy-D-xylulose 5-phosphate + NADPH + H(+). The protein operates within isoprenoid biosynthesis; isopentenyl diphosphate biosynthesis via DXP pathway; isopentenyl diphosphate from 1-deoxy-D-xylulose 5-phosphate: step 1/6. Catalyzes the NADPH-dependent rearrangement and reduction of 1-deoxy-D-xylulose-5-phosphate (DXP) to 2-C-methyl-D-erythritol 4-phosphate (MEP). The polypeptide is 1-deoxy-D-xylulose 5-phosphate reductoisomerase (Stutzerimonas stutzeri (strain A1501) (Pseudomonas stutzeri)).